The sequence spans 623 residues: Pentatricopeptide repeat-containing protein At5g15340, mitochondrial (623 aa).

Residues 1–16 constitute a mitochondrion transit peptide; sequence MKCLSYQKVRLLLRHC. 11 PPR repeats span residues 42 to 72, 75 to 109, 110 to 144, 145 to 179, 180 to 206, 207 to 237, 243 to 277, 285 to 319, 320 to 346, 350 to 384, and 385 to 419; these read RSYLSNALFQFYASSGEMVTAQKLFDEIPLS, DNVDWTTLLSSFSRYGLLVNSMKLFVEMRRKRVEI, DDVSVVCLFGVCAKLEDLGFAQQGHGVAVKMGVLT, SVKVCNALMDMYGKCGLVSEVKRIFEELEEKSVVS, WTVVLDTVVKWEGLERGREVFHEMPER, NAVAWTVMVAGYLGAGFTREVLELLAEMVFR, NFVTLCSMLSACAQSGNLVVGRWVHVYALKKEMMM, DVMVGTALVDMYAKCGNIDSSMNVFRLMRKRNVVT, WNALFSGLAMHGKGRMVIDMFPQMIRE, DDLTFTAVLSACSHSGIVDEGWRCFHSLRFYGLEP, and KVDHYACMVDLLGRAGLIEEAEILMREMPVPPNEV. The type E motif stretch occupies residues 420–495; the sequence is VLGSLLGSCS…IPGLSSIYVN (76 aa). Positions 496-526 are type E(+) motif; it reads DSVHRFSSGDRSHPRTKEIYLKLNEVIERIR. Residues 527–623 form a type DYW motif region; that stretch reads SAGYVPDVSG…GGSCSCSDYW (97 aa).

This sequence belongs to the PPR family. PCMP-H subfamily.

Its subcellular location is the mitochondrion. This Arabidopsis thaliana (Mouse-ear cress) protein is Pentatricopeptide repeat-containing protein At5g15340, mitochondrial (PCMP-H91).